A 487-amino-acid chain; its full sequence is Structure-specific endonuclease subunit SLX1 (487 aa).

A GIY-YIG domain is found at 27 to 109 (PFYACYLLRS…QKPELSRHLR (83 aa)). The tract at residues 44 to 69 (RTYVGSTPDPPRRIRQHNGELKQGAW) is disordered. The SLX1-type zinc-finger motif lies at 262 to 328 (CHLCQERIAF…LPYQGLCPNC (67 aa)). Positions 359 to 396 (KAEKAEKAEKAEKAEKAEKAEKAGRKVRQREMKTKKGD) are enriched in basic and acidic residues. Disordered regions lie at residues 359-407 (KAEK…QPES) and 433-475 (PARS…SEPE). The segment covering 397-407 (QSNGTVAQPES) has biased composition (polar residues). The span at 438–455 (KSKDVGGEGIRHSTHTDD) shows a compositional bias: basic and acidic residues. Positions 465–475 (ETEDESESEPE) are enriched in acidic residues.

This sequence belongs to the SLX1 family. In terms of assembly, forms a heterodimer with SLX4. A divalent metal cation is required as a cofactor.

The protein resides in the nucleus. In terms of biological role, catalytic subunit of the SLX1-SLX4 structure-specific endonuclease that resolves DNA secondary structures generated during DNA repair and recombination. Has endonuclease activity towards branched DNA substrates, introducing single-strand cuts in duplex DNA close to junctions with ss-DNA. The sequence is that of Structure-specific endonuclease subunit SLX1 from Cryptococcus neoformans var. neoformans serotype D (strain B-3501A) (Filobasidiella neoformans).